We begin with the raw amino-acid sequence, 226 residues long: Phosphoribosylformylglycinamidine synthase subunit PurQ (226 aa).

The Glutamine amidotransferase type-1 domain maps to 2–226 (KFAVIQFPGS…LKNFLVTVKN (225 aa)). Residue Cys86 is the Nucleophile of the active site. Active-site residues include His195 and Glu197.

Part of the FGAM synthase complex composed of 1 PurL, 1 PurQ and 2 PurS subunits.

Its subcellular location is the cytoplasm. It catalyses the reaction N(2)-formyl-N(1)-(5-phospho-beta-D-ribosyl)glycinamide + L-glutamine + ATP + H2O = 2-formamido-N(1)-(5-O-phospho-beta-D-ribosyl)acetamidine + L-glutamate + ADP + phosphate + H(+). The enzyme catalyses L-glutamine + H2O = L-glutamate + NH4(+). The protein operates within purine metabolism; IMP biosynthesis via de novo pathway; 5-amino-1-(5-phospho-D-ribosyl)imidazole from N(2)-formyl-N(1)-(5-phospho-D-ribosyl)glycinamide: step 1/2. Functionally, part of the phosphoribosylformylglycinamidine synthase complex involved in the purines biosynthetic pathway. Catalyzes the ATP-dependent conversion of formylglycinamide ribonucleotide (FGAR) and glutamine to yield formylglycinamidine ribonucleotide (FGAM) and glutamate. The FGAM synthase complex is composed of three subunits. PurQ produces an ammonia molecule by converting glutamine to glutamate. PurL transfers the ammonia molecule to FGAR to form FGAM in an ATP-dependent manner. PurS interacts with PurQ and PurL and is thought to assist in the transfer of the ammonia molecule from PurQ to PurL. The polypeptide is Phosphoribosylformylglycinamidine synthase subunit PurQ (Lactococcus lactis subsp. cremoris (Streptococcus cremoris)).